The sequence spans 585 residues: Nucleoporin p58/p45 (585 aa).

5 repeat units span residues 7-8, 30-31, 42-43, 61-62, and 66-67. Positions 7-565 are 14 X 2 AA repeats of F-G; it reads FGSGTLGSTT…VSNPASAGFG (559 aa). The segment at 194–232 is disordered; the sequence is TSAASSEGLGGIDFSTSSDKKSDKTGTRPEDSKALKDEN. Positions 211 to 232 are enriched in basic and acidic residues; that stretch reads SDKKSDKTGTRPEDSKALKDEN. Coiled coils occupy residues 242–262 and 300–367; these read ENLQKFVKEQKQVQEEISRMS and ETAQ…SHIT. Thr-317 carries the phosphothreonine modification. 9 repeat units span residues 474-475, 478-479, 499-500, 505-506, 515-516, 517-518, 531-532, 554-555, and 564-565. Residues 563 to 585 are disordered; the sequence is GFGTGGQLLQLKRPPAGNKRGKR.

Belongs to the NUP58 family. Component of the p62 complex, a complex composed of NUP62, NUP54, and isoform p58 and isoform p45 of NUP58. Isoform p58 interacts with NUTF2. Isoform p58 interacts with SRP1-alpha and Importin p97 proteins when they are together, but not with SRP1-alpha protein alone. Post-translationally, O-glycosylated. Expressed in liver.

Its subcellular location is the nucleus. It localises to the nuclear pore complex. The protein resides in the nucleus membrane. Component of the nuclear pore complex, a complex required for the trafficking across the nuclear membrane. This chain is Nucleoporin p58/p45, found in Rattus norvegicus (Rat).